A 189-amino-acid chain; its full sequence is UPF0312 protein VC_A0539 (189 aa).

The N-terminal stretch at 1–22 (MKKTLMAVGLAAVMSIPFAANA) is a signal peptide.

The protein belongs to the UPF0312 family. Type 1 subfamily.

The protein resides in the periplasm. This is UPF0312 protein VC_A0539 from Vibrio cholerae serotype O1 (strain ATCC 39315 / El Tor Inaba N16961).